The primary structure comprises 787 residues: Pleckstrin homology domain-containing family G member 6 (787 aa).

Residues 161–353 (HQQEALWELL…ESFLRHINGQ (193 aa)) form the DH domain. In terms of domain architecture, PH spans 409–509 (QLLLEGPVRV…WLEKTQHAQT (101 aa)). A disordered region spans residues 533-762 (QGTESPSTRP…EPGNGKPRRL (230 aa)). Low complexity predominate over residues 535-557 (TESPSTRPSTPSPSPEDSQSSAE). A compositionally biased stretch (basic and acidic residues) spans 724 to 742 (LRPRSLREDMLREIREELA).

Interacts with MYH10. Interacts with ELMO1 and EZR (in an open conformation). Interacts with CSPP1.

Its subcellular location is the cell projection. The protein resides in the microvillus. It is found in the cytoplasm. The protein localises to the cytoskeleton. It localises to the spindle. Its subcellular location is the cleavage furrow. Its function is as follows. Guanine nucleotide exchange factor activating the small GTPase RHOA, which, in turn, induces myosin filament formation. Also activates RHOG. Does not activate RAC1, or to a much lower extent than RHOA and RHOG. Part of a functional unit, involving PLEKHG6, MYH10 and RHOA, at the cleavage furrow to advance furrow ingression during cytokinesis. In epithelial cells, required for the formation of microvilli and membrane ruffles on the apical pole. Along with EZR, required for normal macropinocytosis. This Mus musculus (Mouse) protein is Pleckstrin homology domain-containing family G member 6 (Plekhg6).